Here is a 414-residue protein sequence, read N- to C-terminus: Esterase FrsA (414 aa).

The protein belongs to the FrsA family.

It carries out the reaction a carboxylic ester + H2O = an alcohol + a carboxylate + H(+). Functionally, catalyzes the hydrolysis of esters. The protein is Esterase FrsA of Salmonella agona (strain SL483).